Consider the following 128-residue polypeptide: Large-conductance mechanosensitive channel (128 aa).

The next 2 helical transmembrane spans lie at 11–31 (FALK…AAFG) and 70–90 (GAFI…FIFV).

Belongs to the MscL family. As to quaternary structure, homopentamer.

It localises to the cell membrane. Channel that opens in response to stretch forces in the membrane lipid bilayer. May participate in the regulation of osmotic pressure changes within the cell. This chain is Large-conductance mechanosensitive channel, found in Listeria innocua serovar 6a (strain ATCC BAA-680 / CLIP 11262).